The sequence spans 86 residues: CRISPR-associated endoribonuclease Cas2 (86 aa).

A Mg(2+)-binding site is contributed by Asp8.

This sequence belongs to the CRISPR-associated endoribonuclease Cas2 protein family. In terms of assembly, homodimer, forms a heterotetramer with a Cas1 homodimer. Mg(2+) serves as cofactor.

Functionally, CRISPR (clustered regularly interspaced short palindromic repeat), is an adaptive immune system that provides protection against mobile genetic elements (viruses, transposable elements and conjugative plasmids). CRISPR clusters contain sequences complementary to antecedent mobile elements and target invading nucleic acids. CRISPR clusters are transcribed and processed into CRISPR RNA (crRNA). Functions as a ssRNA-specific endoribonuclease. Involved in the integration of spacer DNA into the CRISPR cassette. Plasmid targeted by CRISPR locus P1 transform wild-type cells very poorly. The chain is CRISPR-associated endoribonuclease Cas2 from Haloferax volcanii (strain ATCC 29605 / DSM 3757 / JCM 8879 / NBRC 14742 / NCIMB 2012 / VKM B-1768 / DS2) (Halobacterium volcanii).